The sequence spans 1514 residues: Mitogen-activated protein kinase-binding protein 1 (1514 aa).

Ala2 carries the post-translational modification N-acetylalanine. WD repeat units lie at residues Ser88 to Glu129, Glu132 to Ser173, Lys175 to Val213, Asp276 to Thr315, Ala342 to Lys381, Tyr387 to Ser436, Asp477 to Lys516, Ala519 to Gln561, Glu565 to Gln606, Val614 to Leu653, Gly659 to Thr698, and Gly701 to Met740. 4 disordered regions span residues Arg748–Pro804, Pro880–Cys925, Glu951–Ala1256, and Asp1299–Lys1336. Over residues Lys789 to Leu800 the composition is skewed to acidic residues. 2 stretches are compositionally biased toward polar residues: residues Leu905–Cys925 and Asp961–Gln971. Low complexity predominate over residues Asp996 to Pro1011. Positions Asp1032 to Gly1048 are enriched in acidic residues. A compositionally biased stretch (low complexity) spans Pro1113 to Pro1126. Polar residues-rich tracts occupy residues Ser1188 to His1200 and His1245 to Ala1256. A Phosphoserine modification is found at Ser1198.

In terms of assembly, can form homodimers (via C-terminus). Interacts (via C-terminus) with WDR62 (via C-terminus). Interacts with MAPK9. Interacts (via N-terminus) with NOD2; the interaction is enhanced in presence of muramyl dipeptide (MDP). Interacts with MAPK10. Expressed in intestinal mucosa, where it is detected in epithelial cells, endothelial cells, smooth muscle cells and immune cells, such as lymphocytes. Expressed in kidney.

It is found in the cytoplasm. Its subcellular location is the nucleus. It localises to the cytoskeleton. The protein resides in the spindle pole. Negative regulator of NOD2 function. It down-regulates NOD2-induced processes such as activation of NF-kappa-B signaling, IL8 secretion and antibacterial response. Involved in JNK signaling pathway. This is Mitogen-activated protein kinase-binding protein 1 (MAPKBP1) from Homo sapiens (Human).